The chain runs to 400 residues: Acetyl-CoA decarbonylase/synthase complex subunit delta (400 aa).

It belongs to the CdhD family. As to quaternary structure, heterodimer of delta and gamma chains. The ACDS complex is made up of alpha, epsilon, beta, gamma and delta chains with a probable stoichiometry of (alpha(2)epsilon(2))(4)-beta(8)-(gamma(1)delta(1))(8).

Part of a complex that catalyzes the reversible cleavage of acetyl-CoA, allowing autotrophic growth from CO(2). Probably maintains the overall quaternary structure of the ACDS complex. This chain is Acetyl-CoA decarbonylase/synthase complex subunit delta, found in Methanopyrus kandleri (strain AV19 / DSM 6324 / JCM 9639 / NBRC 100938).